The chain runs to 329 residues: Ketol-acid reductoisomerase (NADP(+)) (329 aa).

The KARI N-terminal Rossmann domain maps to A2–T182. NADP(+)-binding positions include Y25–Q28, S51, S53, and D83–Q86. H108 is an active-site residue. G134 lines the NADP(+) pocket. The KARI C-terminal knotted domain occupies T183 to L328. Mg(2+) is bound by residues D191, E195, E227, and E231. S252 is a substrate binding site.

It belongs to the ketol-acid reductoisomerase family. Mg(2+) is required as a cofactor.

It catalyses the reaction (2R)-2,3-dihydroxy-3-methylbutanoate + NADP(+) = (2S)-2-acetolactate + NADPH + H(+). The catalysed reaction is (2R,3R)-2,3-dihydroxy-3-methylpentanoate + NADP(+) = (S)-2-ethyl-2-hydroxy-3-oxobutanoate + NADPH + H(+). The protein operates within amino-acid biosynthesis; L-isoleucine biosynthesis; L-isoleucine from 2-oxobutanoate: step 2/4. It functions in the pathway amino-acid biosynthesis; L-valine biosynthesis; L-valine from pyruvate: step 2/4. In terms of biological role, involved in the biosynthesis of branched-chain amino acids (BCAA). Catalyzes an alkyl-migration followed by a ketol-acid reduction of (S)-2-acetolactate (S2AL) to yield (R)-2,3-dihydroxy-isovalerate. In the isomerase reaction, S2AL is rearranged via a Mg-dependent methyl migration to produce 3-hydroxy-3-methyl-2-ketobutyrate (HMKB). In the reductase reaction, this 2-ketoacid undergoes a metal-dependent reduction by NADPH to yield (R)-2,3-dihydroxy-isovalerate. The polypeptide is Ketol-acid reductoisomerase (NADP(+)) (Clostridioides difficile (strain 630) (Peptoclostridium difficile)).